Reading from the N-terminus, the 130-residue chain is Small ribosomal subunit protein uS9 (130 aa).

It belongs to the universal ribosomal protein uS9 family.

The polypeptide is Small ribosomal subunit protein uS9 (Nitratidesulfovibrio vulgaris (strain ATCC 29579 / DSM 644 / CCUG 34227 / NCIMB 8303 / VKM B-1760 / Hildenborough) (Desulfovibrio vulgaris)).